The primary structure comprises 100 residues: MNSSCEKIFGVLRSPRVSEKSSRLQEISNVYVFEVSSDATKVDVKNAVERLFDVKVGVVRVLNVKGKSKSFRNRGGSRSGWRKAYVRLIDGQSIDVAANV.

Belongs to the universal ribosomal protein uL23 family. In terms of assembly, part of the 50S ribosomal subunit. Contacts protein L29, and trigger factor when it is bound to the ribosome.

One of the early assembly proteins it binds 23S rRNA. One of the proteins that surrounds the polypeptide exit tunnel on the outside of the ribosome. Forms the main docking site for trigger factor binding to the ribosome. This chain is Large ribosomal subunit protein uL23, found in Xylella fastidiosa (strain 9a5c).